The sequence spans 92 residues: YcgL domain-containing protein VC0395_A1544/VC395_2072 (92 aa).

A YcgL domain is found at 1–84; it reads MLCSIYKSPK…PPENLLEQHK (84 aa). The interval 71 to 92 is disordered; it reads QLPPPPENLLEQHKERKARQTP.

This is YcgL domain-containing protein VC0395_A1544/VC395_2072 from Vibrio cholerae serotype O1 (strain ATCC 39541 / Classical Ogawa 395 / O395).